The following is a 327-amino-acid chain: Acetyl-coenzyme A carboxylase carboxyl transferase subunit beta (327 aa).

Residues Leu24 to Pro293 form the CoA carboxyltransferase N-terminal domain. The segment covering Pro293–Gly311 has biased composition (low complexity). Positions Pro293 to Ala327 are disordered. The span at Ala312–Ala327 shows a compositional bias: pro residues.

The protein belongs to the AccD/PCCB family. In terms of assembly, acetyl-CoA carboxylase is a heterohexamer composed of biotin carboxyl carrier protein (AccB), biotin carboxylase (AccC) and two subunits each of ACCase subunit alpha (AccA) and ACCase subunit beta (AccD).

The protein localises to the cytoplasm. The catalysed reaction is N(6)-carboxybiotinyl-L-lysyl-[protein] + acetyl-CoA = N(6)-biotinyl-L-lysyl-[protein] + malonyl-CoA. The protein operates within lipid metabolism; malonyl-CoA biosynthesis; malonyl-CoA from acetyl-CoA: step 1/1. In terms of biological role, component of the acetyl coenzyme A carboxylase (ACC) complex. Biotin carboxylase (BC) catalyzes the carboxylation of biotin on its carrier protein (BCCP) and then the CO(2) group is transferred by the transcarboxylase to acetyl-CoA to form malonyl-CoA. The protein is Acetyl-coenzyme A carboxylase carboxyl transferase subunit beta of Rhodopseudomonas palustris (strain ATCC BAA-98 / CGA009).